The following is a 350-amino-acid chain: S-adenosylmethionine:tRNA ribosyltransferase-isomerase (350 aa).

This sequence belongs to the QueA family. Monomer.

It localises to the cytoplasm. It catalyses the reaction 7-aminomethyl-7-carbaguanosine(34) in tRNA + S-adenosyl-L-methionine = epoxyqueuosine(34) in tRNA + adenine + L-methionine + 2 H(+). It participates in tRNA modification; tRNA-queuosine biosynthesis. In terms of biological role, transfers and isomerizes the ribose moiety from AdoMet to the 7-aminomethyl group of 7-deazaguanine (preQ1-tRNA) to give epoxyqueuosine (oQ-tRNA). The sequence is that of S-adenosylmethionine:tRNA ribosyltransferase-isomerase from Bacillus cereus (strain ZK / E33L).